A 360-amino-acid polypeptide reads, in one-letter code: Photosystem II protein D1 (360 aa).

The next 3 helical transmembrane spans lie at 29-46 (YIGW…TATS), 118-133 (HFFI…EWEL), and 142-156 (WIAV…AATA). A chlorophyll a-binding site is contributed by H118. Y126 is a pheophytin a binding site. Residues D170 and E189 each coordinate [CaMn4O5] cluster. The helical transmembrane segment at 197–218 (FHMMGVAGVFGGSLFSAMHGSL) threads the bilayer. H198 contacts chlorophyll a. A quinone is bound by residues H215 and 264–265 (SF). H215 is a binding site for Fe cation. H272 contributes to the Fe cation binding site. Residues 274–288 (FLALWPVVCICVTAL) form a helical membrane-spanning segment. The [CaMn4O5] cluster site is built by H332, E333, D342, and A344. A propeptide spanning residues 345–360 (SEVSLPVALNKVEING) is cleaved from the precursor.

Belongs to the reaction center PufL/M/PsbA/D family. As to quaternary structure, PSII is composed of 1 copy each of membrane proteins PsbA, PsbB, PsbC, PsbD, PsbE, PsbF, PsbH, PsbI, PsbJ, PsbK, PsbL, PsbM, PsbT, PsbY, PsbZ, Psb30/Ycf12, at least 3 peripheral proteins of the oxygen-evolving complex and a large number of cofactors. It forms dimeric complexes. The cofactor is The D1/D2 heterodimer binds P680, chlorophylls that are the primary electron donor of PSII, and subsequent electron acceptors. It shares a non-heme iron and each subunit binds pheophytin, quinone, additional chlorophylls, carotenoids and lipids. D1 provides most of the ligands for the Mn4-Ca-O5 cluster of the oxygen-evolving complex (OEC). There is also a Cl(-1) ion associated with D1 and D2, which is required for oxygen evolution. The PSII complex binds additional chlorophylls, carotenoids and specific lipids.. Tyr-161 forms a radical intermediate that is referred to as redox-active TyrZ, YZ or Y-Z. In terms of processing, C-terminally processed by CTPA; processing is essential to allow assembly of the oxygen-evolving complex and thus photosynthetic growth.

It is found in the plastid. It localises to the chloroplast thylakoid membrane. It catalyses the reaction 2 a plastoquinone + 4 hnu + 2 H2O = 2 a plastoquinol + O2. Functionally, photosystem II (PSII) is a light-driven water:plastoquinone oxidoreductase that uses light energy to abstract electrons from H(2)O, generating O(2) and a proton gradient subsequently used for ATP formation. It consists of a core antenna complex that captures photons, and an electron transfer chain that converts photonic excitation into a charge separation. The D1/D2 (PsbA/PsbD) reaction center heterodimer binds P680, the primary electron donor of PSII as well as several subsequent electron acceptors. The protein is Photosystem II protein D1 of Galdieria sulphuraria (Red alga).